The sequence spans 65 residues: Protein translocase subunit SecE (65 aa).

A helical membrane pass occupies residues 38-58 (IVIVTVVFFLIFFYALDLGIG).

Belongs to the SecE/SEC61-gamma family. As to quaternary structure, component of the Sec protein translocase complex. Heterotrimer consisting of SecY, SecE and SecG subunits. The heterotrimers can form oligomers, although 1 heterotrimer is thought to be able to translocate proteins. Interacts with the ribosome. Interacts with SecDF, and other proteins may be involved. Interacts with SecA.

The protein resides in the cell membrane. Essential subunit of the Sec protein translocation channel SecYEG. Clamps together the 2 halves of SecY. May contact the channel plug during translocation. The sequence is that of Protein translocase subunit SecE from Staphylococcus carnosus (strain TM300).